A 72-amino-acid chain; its full sequence is Translation initiation factor IF-1 (72 aa).

One can recognise an S1-like domain in the interval 1-72 (MAKEDSIEMQ…TKGRIIFRAR (72 aa)).

It belongs to the IF-1 family. Component of the 30S ribosomal translation pre-initiation complex which assembles on the 30S ribosome in the order IF-2 and IF-3, IF-1 and N-formylmethionyl-tRNA(fMet); mRNA recruitment can occur at any time during PIC assembly.

The protein resides in the cytoplasm. Its function is as follows. One of the essential components for the initiation of protein synthesis. Stabilizes the binding of IF-2 and IF-3 on the 30S subunit to which N-formylmethionyl-tRNA(fMet) subsequently binds. Helps modulate mRNA selection, yielding the 30S pre-initiation complex (PIC). Upon addition of the 50S ribosomal subunit IF-1, IF-2 and IF-3 are released leaving the mature 70S translation initiation complex. The protein is Translation initiation factor IF-1 of Actinobacillus succinogenes (strain ATCC 55618 / DSM 22257 / CCUG 43843 / 130Z).